Here is a 368-residue protein sequence, read N- to C-terminus: tRNA-specific 2-thiouridylase MnmA (368 aa).

ATP contacts are provided by residues 23–30 and Leu49; that span reads ALSGGVDS. Cys110 serves as the catalytic Nucleophile. An intrachain disulfide couples Cys110 to Cys209. Position 135 (Gly135) interacts with ATP. Positions 159 to 161 are interaction with tRNA; that stretch reads KDQ. The active-site Cysteine persulfide intermediate is Cys209. The interval 314–315 is interaction with tRNA; it reads RY.

This sequence belongs to the MnmA/TRMU family.

It localises to the cytoplasm. It catalyses the reaction S-sulfanyl-L-cysteinyl-[protein] + uridine(34) in tRNA + AH2 + ATP = 2-thiouridine(34) in tRNA + L-cysteinyl-[protein] + A + AMP + diphosphate + H(+). Catalyzes the 2-thiolation of uridine at the wobble position (U34) of tRNA, leading to the formation of s(2)U34. This Synechococcus sp. (strain JA-2-3B'a(2-13)) (Cyanobacteria bacterium Yellowstone B-Prime) protein is tRNA-specific 2-thiouridylase MnmA.